The sequence spans 117 residues: Immunoglobulin kappa variable 9-129 (117 aa).

An N-terminal signal peptide occupies residues 1–22 (MDMRAPAQVFGFLLLWFPGARC). A framework-1 region spans residues 23 to 45 (DIQMTQSPSSLSASLGERVSLTC). Cysteine 45 and cysteine 110 are disulfide-bonded. Positions 46–56 (RASQDIHGYLN) are complementarity-determining-1. The segment at 57–71 (LFQQKPGETIKHLIY) is framework-2. Residues 72 to 78 (ETSNLDS) form a complementarity-determining-2 region. Residues 79–110 (GVPKRFSGSRSGSDYSLIIGSLESEDFADYYC) form a framework-3 region. The tract at residues 111–117 (LQYASSP) is complementarity-determining-3.

The chain is Immunoglobulin kappa variable 9-129 from Mus musculus (Mouse).